A 424-amino-acid polypeptide reads, in one-letter code: Fasciclin-like arabinogalactan protein 1 (424 aa).

The N-terminal stretch at 1-24 is a signal peptide; sequence MAKKMSSLIIIFNILLLLTTQTHA. FAS1 domains follow at residues 25-170 and 184-323; these read HNVT…SRVL and EMNL…DKVL. Residues asparagine 26, asparagine 128, asparagine 160, asparagine 186, and asparagine 240 are each glycosylated (N-linked (GlcNAc...) asparagine). The tract at residues 338–393 is disordered; the sequence is APAPAPEDGDVADSPKAAKGKAKGKKKKAAPSPDNDPFGDSDSPAEGPDGEADDAT. Residues 355 to 366 are compositionally biased toward basic residues; the sequence is AKGKAKGKKKKA. Aspartate 396 carries the GPI-anchor amidated aspartate lipid modification. Positions 397–424 are cleaved as a propeptide — removed in mature form; it reads AGAVRIIGGAKAGLVVSLLCLFASSWLL.

This sequence belongs to the fasciclin-like AGP family. In terms of tissue distribution, preferentially expressed in flowers.

Its subcellular location is the secreted. It is found in the extracellular space. The protein resides in the apoplast. It localises to the cell membrane. In terms of biological role, may be a cell surface adhesion protein. The chain is Fasciclin-like arabinogalactan protein 1 (FLA1) from Arabidopsis thaliana (Mouse-ear cress).